The primary structure comprises 312 residues: Iron/alpha-ketoglutarate-dependent dioxygenase penM (312 aa).

His134, Asp136, and His211 together coordinate Fe cation. Residues 287–312 are disordered; sequence LGLKSEQPLPDGMEKGSMQETDIGGQ.

It belongs to the PhyH family. As to quaternary structure, homodimer. It depends on Fe cation as a cofactor.

It carries out the reaction (-)-cyclopeptine + 2-oxoglutarate + O2 = (Z)-dehydrocyclopeptine + succinate + CO2 + H2O. The catalysed reaction is (Z)-dehydrocyclopeptine + 2-oxoglutarate + O2 = (-)-cyclopenine + succinate + CO2. The enzyme catalyses (-)-4'-methoxycyclopeptine + 2-oxoglutarate + O2 = (Z)-4'-methoxydehydrocyclopeptine + succinate + CO2 + H2O. It catalyses the reaction (Z)-4'-methoxydehydrocyclopeptine + 2-oxoglutarate + O2 = (-)-4'-methoxycyclopenine + succinate + CO2. Its pathway is secondary metabolite biosynthesis. It participates in alkaloid biosynthesis. The protein operates within mycotoxin biosynthesis. Iron/alpha-ketoglutarate-dependent dioxygenase; part of the gene cluster that mediates the biosynthesis of penigequinolones, potent insecticidal alkaloids that contain a highly modified 10-carbon prenyl group. The first stage is catalyzed by the nonribosomal peptide synthetase penN that condenses anthranilic acid and O-methyl-L-tyrosine to produce 4'-methoxycyclopeptin. 4'-methoxycyclopeptin is then converted to 4'-methoxydehydrocyclopeptin by the ketoglutarate-dependent dioxygenase penM through dehydrogenation to form a double bond between C-alpha and C-beta of the O-methyltyrosine side chain. PenM also converts its first product methoxydehydrocyclopeptin to 4'-methoxycyclopenin. The following conversion of 4'methoxycyclopenin into 4'-methoxyviridicatin is catalyzed by the cyclopenase penL. 4'-methoxyviridicatin is the precursor of quinolone natural products, and is further converted to quinolinone B. The prenyltransferase penI then catalyzes the canonical Friedel-Crafts alkylation of quinolinone B with dimethylallyl cation to yield dimethylallyl quinolone, which is subjected to FAD-dependent dehydrogenation by the FAD-linked oxidoreductase penH to yield conjugated aryl diene. The delta(3') double bond then serves as the site of the second alkylation with DMAPP catalyzed by the prenyltransferase penG to yield a carbenium ion intermediate, which can be attacked by H(2)O to yield a styrenyl quinolone containing a C3'-hydroxyprenyl chain, or undergo cyclization to yield yaequinolones J1 and J2. The conversion of the styrenyl quinolone into the tetrahydrofuran-containing yaequinolone C is performed by the FAD-dependent monooxygenase penE and involves epoxidation of the terminal C7'-C8' olefin, followed by epoxide ring opening initiated by the C3' hydroxyl group. The predicted cysteine hydrolase penJ acts as an epoxide hydrolase that enhances the rate of the 5-exo-tet cyclization step, increasing the yield of yaequinolone C. PenF catalyzes the cationic rearrangement of the epoxide formed by penE (before ring opening to produce yaequinolone C) into yaequinolone D. Finally, the short-chain dehydrogenase/reductase (SDR)-like reductase penD, catalyzes both the dehydration of yaequinolone D and the reduction of the resulting oxonium to yield penigequinolone. The sequence is that of Iron/alpha-ketoglutarate-dependent dioxygenase penM from Penicillium thymicola.